A 311-amino-acid polypeptide reads, in one-letter code: GTP cyclohydrolase MptA (311 aa).

Belongs to the GTP cyclohydrolase IV family. As to quaternary structure, homodimer. The cofactor is Fe(2+).

It carries out the reaction GTP + H2O = 7,8-dihydroneopterin 2',3'-cyclic phosphate + formate + diphosphate + H(+). Its pathway is cofactor biosynthesis; 5,6,7,8-tetrahydromethanopterin biosynthesis. Converts GTP to 7,8-dihydro-D-neopterin 2',3'-cyclic phosphate, the first intermediate in the biosynthesis of coenzyme methanopterin. The polypeptide is GTP cyclohydrolase MptA (Halobacterium salinarum (strain ATCC 29341 / DSM 671 / R1)).